A 337-amino-acid chain; its full sequence is Pyridoxal 5'-phosphate synthase subunit PdxS (337 aa).

D65 provides a ligand contact to D-ribose 5-phosphate. K122 (schiff-base intermediate with D-ribose 5-phosphate) is an active-site residue. Residue G194 coordinates D-ribose 5-phosphate. D-glyceraldehyde 3-phosphate is bound at residue K206. D-ribose 5-phosphate contacts are provided by residues G255 and 276–277; that span reads GS.

The protein belongs to the PdxS/SNZ family. In terms of assembly, in the presence of PdxT, forms a dodecamer of heterodimers.

The enzyme catalyses aldehydo-D-ribose 5-phosphate + D-glyceraldehyde 3-phosphate + L-glutamine = pyridoxal 5'-phosphate + L-glutamate + phosphate + 3 H2O + H(+). It participates in cofactor biosynthesis; pyridoxal 5'-phosphate biosynthesis. In terms of biological role, catalyzes the formation of pyridoxal 5'-phosphate from ribose 5-phosphate (RBP), glyceraldehyde 3-phosphate (G3P) and ammonia. The ammonia is provided by the PdxT subunit. Can also use ribulose 5-phosphate and dihydroxyacetone phosphate as substrates, resulting from enzyme-catalyzed isomerization of RBP and G3P, respectively. This chain is Pyridoxal 5'-phosphate synthase subunit PdxS, found in Metallosphaera sedula (strain ATCC 51363 / DSM 5348 / JCM 9185 / NBRC 15509 / TH2).